Consider the following 119-residue polypeptide: Large ribosomal subunit protein bL20 (119 aa).

This sequence belongs to the bacterial ribosomal protein bL20 family.

Binds directly to 23S ribosomal RNA and is necessary for the in vitro assembly process of the 50S ribosomal subunit. It is not involved in the protein synthesizing functions of that subunit. The polypeptide is Large ribosomal subunit protein bL20 (Rhodopseudomonas palustris (strain BisB5)).